A 256-amino-acid chain; its full sequence is 3-dehydroquinate dehydratase (256 aa).

Residues serine 19, 38-40, and arginine 68 each bind 3-dehydroquinate; that span reads EIR. The active-site Proton donor/acceptor is histidine 122. Catalysis depends on lysine 147, which acts as the Schiff-base intermediate with substrate. Residues arginine 185, threonine 204, and glutamine 208 each coordinate 3-dehydroquinate.

The protein belongs to the type-I 3-dehydroquinase family. As to quaternary structure, homodimer.

The catalysed reaction is 3-dehydroquinate = 3-dehydroshikimate + H2O. Its pathway is metabolic intermediate biosynthesis; chorismate biosynthesis; chorismate from D-erythrose 4-phosphate and phosphoenolpyruvate: step 3/7. In terms of biological role, involved in the third step of the chorismate pathway, which leads to the biosynthesis of aromatic amino acids. Catalyzes the cis-dehydration of 3-dehydroquinate (DHQ) and introduces the first double bond of the aromatic ring to yield 3-dehydroshikimate. The protein is 3-dehydroquinate dehydratase of Methanospirillum hungatei JF-1 (strain ATCC 27890 / DSM 864 / NBRC 100397 / JF-1).